A 121-amino-acid chain; its full sequence is Large ribosomal subunit protein uL14 (121 aa).

The protein belongs to the universal ribosomal protein uL14 family. As to quaternary structure, part of the 50S ribosomal subunit. Forms a cluster with proteins L3 and L19. In the 70S ribosome, L14 and L19 interact and together make contacts with the 16S rRNA in bridges B5 and B8.

Its function is as follows. Binds to 23S rRNA. Forms part of two intersubunit bridges in the 70S ribosome. The polypeptide is Large ribosomal subunit protein uL14 (Porphyromonas gingivalis (strain ATCC 33277 / DSM 20709 / CIP 103683 / JCM 12257 / NCTC 11834 / 2561)).